The primary structure comprises 193 residues: Oligoribonuclease (193 aa).

In terms of domain architecture, Exonuclease spans 14-177 (LIWIDLEMTG…SDIYDSIAEL (164 aa)). Residue Tyr-135 is part of the active site.

The protein belongs to the oligoribonuclease family.

The protein localises to the cytoplasm. Its function is as follows. 3'-to-5' exoribonuclease specific for small oligoribonucleotides. This Xylella fastidiosa (strain Temecula1 / ATCC 700964) protein is Oligoribonuclease.